The sequence spans 255 residues: Aliphatic sulfonates import ATP-binding protein SsuB (255 aa).

The region spanning 12 to 233 is the ABC transporter domain; sequence LLLNAVSKHY…RLGSVRLAEL (222 aa). Residue 44–51 coordinates ATP; that stretch reads GRSGGGKS.

It belongs to the ABC transporter superfamily. Aliphatic sulfonates importer (TC 3.A.1.17.2) family. As to quaternary structure, the complex is composed of two ATP-binding proteins (SsuB), two transmembrane proteins (SsuC) and a solute-binding protein (SsuA).

It is found in the cell inner membrane. It catalyses the reaction ATP + H2O + aliphatic sulfonate-[sulfonate-binding protein]Side 1 = ADP + phosphate + aliphatic sulfonateSide 2 + [sulfonate-binding protein]Side 1.. Part of the ABC transporter complex SsuABC involved in aliphatic sulfonates import. Responsible for energy coupling to the transport system. In Shigella sonnei (strain Ss046), this protein is Aliphatic sulfonates import ATP-binding protein SsuB.